Here is a 346-residue protein sequence, read N- to C-terminus: MLKSRLRMFLNELKLLVLTGGGRPRAEPQPRGGRGGGCGWAPFAGCSTRDGDGDEEEYYGSEPRARGLAGDKEPRAGPLPPPAPPLPPPGALDALSLSSSLDSGLRTPQCRICFQGPEQGELLSPCRCDGSVRCTHQPCLIRWISERGSWSCELCYFKYQVLAISTKNPLQWQAISLTVIEKVQIAAIVLGSLFLVASISWLIWSSLSPSAKWQRQDLLFQICYGMYGFMDVVCIGLIIHEGSSVYRIFKRWQAVNQQWKVLNYDKTKDIGGDAGGGTAGKSGPRNSRTGPTSGATSRPPAAQRMRTLLPQRCGYTILHLLGQLRPPDARSSSHSGREVVMRVTTV.

Disordered regions lie at residues 20–39 and 47–92; these read GGGRPRAEPQPRGGRGGGCG and STRD…PGAL. The span at 63 to 75 shows a compositional bias: basic and acidic residues; the sequence is PRARGLAGDKEPR. Over residues 77–90 the composition is skewed to pro residues; that stretch reads GPLPPPAPPLPPPG. The segment at 102–162 adopts an RING-CH-type zinc-finger fold; the sequence is DSGLRTPQCR…ELCYFKYQVL (61 aa). Residues cysteine 110, cysteine 113, cysteine 126, cysteine 128, histidine 136, cysteine 139, cysteine 152, and cysteine 155 each contribute to the Zn(2+) site. 2 helical membrane-spanning segments follow: residues 185–205 and 219–239; these read IAAIVLGSLFLVASISWLIWS and LFQICYGMYGFMDVVCIGLII. 2 disordered regions span residues 273 to 301 and 326 to 346; these read DAGGGTAGKSGPRNSRTGPTSGATSRPPA and PPDARSSSHSGREVVMRVTTV. Positions 284-296 are enriched in polar residues; it reads PRNSRTGPTSGAT.

In terms of assembly, homodimer. In terms of tissue distribution, ubiquitously expressed.

It is found in the golgi apparatus membrane. The protein resides in the lysosome membrane. The enzyme catalyses S-ubiquitinyl-[E2 ubiquitin-conjugating enzyme]-L-cysteine + [acceptor protein]-L-lysine = [E2 ubiquitin-conjugating enzyme]-L-cysteine + N(6)-ubiquitinyl-[acceptor protein]-L-lysine.. The protein operates within protein modification; protein ubiquitination. Functionally, E3 ubiquitin-protein ligase that may mediate ubiquitination of MHC-I, CD4 and ICAM1, and promote their subsequent endocytosis and sorting to lysosomes via multivesicular bodies. E3 ubiquitin ligases accept ubiquitin from an E2 ubiquitin-conjugating enzyme in the form of a thioester and then directly transfer the ubiquitin to targeted substrates. This is E3 ubiquitin-protein ligase MARCHF9 from Homo sapiens (Human).